Consider the following 379-residue polypeptide: Putative zinc metalloprotease sll0528 (379 aa).

The next 2 membrane-spanning stretches (helical) occupy residues 20 to 40 (LFGI…LVTL) and 54 to 74 (GGTP…SVVA). His-75 lines the Zn(2+) pocket. Residue Glu-76 is part of the active site. His-79 lines the Zn(2+) pocket. The next 3 membrane-spanning stretches (helical) occupy residues 115–135 (FAVA…LTIV), 148–168 (IIGL…IPGL), and 212–232 (GILN…WFLL). 2 consecutive CBS domains span residues 257-315 (VIPN…DWPQ) and 322-379 (MQYP…TSAA).

This sequence belongs to the peptidase M50B family. It depends on Zn(2+) as a cofactor.

It localises to the cell membrane. The protein is Putative zinc metalloprotease sll0528 of Synechocystis sp. (strain ATCC 27184 / PCC 6803 / Kazusa).